A 428-amino-acid polypeptide reads, in one-letter code: Beta-1,3-galactosyl-O-glycosyl-glycoprotein beta-1,6-N-acetylglucosaminyltransferase 4 (428 aa).

At 1–12 (MRRCAVLHRLRC) the chain is on the cytoplasmic side. A helical; Signal-anchor for type II membrane protein transmembrane segment spans residues 13-30 (KFYVFVVSLFVVVKLVYL). Topologically, residues 31–428 (KISMDNSIYI…QLQQCLRRVS (398 aa)) are lumenal. The N-linked (GlcNAc...) asparagine glycan is linked to Asn-59. Cystine bridges form between Cys-60–Cys-214, Cys-148–Cys-369, Cys-169–Cys-196, and Cys-378–Cys-410.

Belongs to the glycosyltransferase 14 family.

Its subcellular location is the golgi apparatus membrane. The catalysed reaction is a 3-O-[beta-D-galactosyl-(1-&gt;3)-N-acetyl-alpha-D-galactosaminyl]-L-seryl-[protein] + UDP-N-acetyl-alpha-D-glucosamine = 3-O-{beta-D-galactosyl-(1-&gt;3)-[N-acetyl-beta-D-glucosaminyl-(1-&gt;6)]-N-acetyl-alpha-D-galactosaminyl}-L-seryl-[protein] + UDP + H(+). It catalyses the reaction a 3-O-[beta-D-galactosyl-(1-&gt;3)-N-acetyl-alpha-D-galactosaminyl]-L-threonyl-[protein] + UDP-N-acetyl-alpha-D-glucosamine = a 3-O-{beta-D-galactosyl-(1-&gt;3)-[N-acetyl-beta-D-glucosaminyl-(1-&gt;6)]-N-acetyl-alpha-D-galactosaminyl}-L-threonyl-[protein] + UDP + H(+). It functions in the pathway protein modification; protein glycosylation. Glycosyltransferase that mediates core 2 O-glycan branching, an important step in mucin-type biosynthesis. This Danio rerio (Zebrafish) protein is Beta-1,3-galactosyl-O-glycosyl-glycoprotein beta-1,6-N-acetylglucosaminyltransferase 4 (gcnt4).